A 47-amino-acid polypeptide reads, in one-letter code: uncharacterized protein (47 aa).

This is an uncharacterized protein from Saccharomyces cerevisiae (strain ATCC 204508 / S288c) (Baker's yeast).